The following is a 107-amino-acid chain: MKIFGLFLITALAEIIGCYLPYLWLREGKSVWLLVPAALSLAIFAWLLSLHPAAAGRVYAAYGGVYIFMAILWLWAVDGIRPTTWDLVGSGVALVGMAIIMFAPRSV.

Helical transmembrane passes span 3 to 23 (IFGL…LPYL), 30 to 50 (SVWL…LLSL), 60 to 80 (AAYG…VDGI), and 84 to 104 (TWDL…MFAP).

Belongs to the UPF0060 family.

It localises to the cell inner membrane. This is UPF0060 membrane protein PSHAa1175 from Pseudoalteromonas translucida (strain TAC 125).